A 452-amino-acid chain; its full sequence is MSSTVSTLWRDCLLQLQDQVSSNDFTTWLRPLQDDVSESNMILYAPNCFIKGWVENHYLTQITKLAQQLLNNDQFMVKIQDGIKPTEKTTTNVEQKTQNENCHNEITSQQNYRSYLNKNHVFDNFVEGKSNQLARAVAQKVAKNPGEQSANPLFLYGGTGLGKTHLLHAVGNGILANNPHAQVVYMHAERFMQSYVKALKSDRMDSFKRFYRTVDALLIDDIQFFAGKDGTQEEFFHIFNSLFERGRQIILTSDRYPKEIEKIEDRLKSRFGWGISVAIEPPELETRVAILLKKAEEKNMVLPEEVAMFIGGKLRTNVRELEGALNRVHAHAEFTGKAITIDFVRETLKDMLALQDKLVTIENIQKIVADYYRIKISDLKSKRRSRNITRPRQLAMALAKELTNRSLPEIGRNFGDRDHTTVLHACKAIAKLREEDNGIQEDWSNLIRTLSV.

The interval methionine 1–glutamine 80 is domain I, interacts with DnaA modulators. Residues glutamine 80–serine 114 are domain II. Residues tyrosine 115–alanine 332 form a domain III, AAA+ region region. The ATP site is built by glycine 160, glycine 162, lysine 163, and threonine 164. The segment at glutamate 333–valine 452 is domain IV, binds dsDNA.

Belongs to the DnaA family. Oligomerizes as a right-handed, spiral filament on DNA at oriC.

The protein resides in the cytoplasm. Its function is as follows. Plays an essential role in the initiation and regulation of chromosomal replication. ATP-DnaA binds to the origin of replication (oriC) to initiate formation of the DNA replication initiation complex once per cell cycle. Binds the DnaA box (a 9 base pair repeat at the origin) and separates the double-stranded (ds)DNA. Forms a right-handed helical filament on oriC DNA; dsDNA binds to the exterior of the filament while single-stranded (ss)DNA is stabiized in the filament's interior. The ATP-DnaA-oriC complex binds and stabilizes one strand of the AT-rich DNA unwinding element (DUE), permitting loading of DNA polymerase. After initiation quickly degrades to an ADP-DnaA complex that is not apt for DNA replication. Binds acidic phospholipids. This is Chromosomal replication initiator protein DnaA from Histophilus somni (strain 129Pt) (Haemophilus somnus).